Here is a 141-residue protein sequence, read N- to C-terminus: Nucleoside diphosphate kinase (141 aa).

6 residues coordinate ATP: Lys11, Phe59, Arg87, Thr93, Arg104, and Asn114. The Pros-phosphohistidine intermediate role is filled by His117.

This sequence belongs to the NDK family. Homotetramer. The cofactor is Mg(2+).

Its subcellular location is the cytoplasm. The enzyme catalyses a 2'-deoxyribonucleoside 5'-diphosphate + ATP = a 2'-deoxyribonucleoside 5'-triphosphate + ADP. It carries out the reaction a ribonucleoside 5'-diphosphate + ATP = a ribonucleoside 5'-triphosphate + ADP. Its function is as follows. Major role in the synthesis of nucleoside triphosphates other than ATP. The ATP gamma phosphate is transferred to the NDP beta phosphate via a ping-pong mechanism, using a phosphorylated active-site intermediate. The polypeptide is Nucleoside diphosphate kinase (Photorhabdus laumondii subsp. laumondii (strain DSM 15139 / CIP 105565 / TT01) (Photorhabdus luminescens subsp. laumondii)).